Here is a 193-residue protein sequence, read N- to C-terminus: Cysteine and glycine-rich protein 1 (193 aa).

The region spanning 10-61 is the LIM zinc-binding 1 domain; sequence CGVCQKTVYFAEEVQCEGNSFHKSCFLCMVCKKNLDSTTVAVHGEEIYCKSC. The short motif at 64–69 is the Nuclear localization signal element; sequence KKYGPK. The residue at position 81 (serine 81) is a Phosphoserine. The residue at position 84 (lysine 84) is an N6-acetyllysine. A Glycyl lysine isopeptide (Lys-Gly) (interchain with G-Cter in SUMO2) cross-link involves residue lysine 91. An N6-acetyllysine mark is found at lysine 112, lysine 131, lysine 137, and lysine 161. In terms of domain architecture, LIM zinc-binding 2 spans 119–170; it reads CPRCSQAVYAAEKVIGAGKSWHKACFRCAKCGKGLESTTLADKDGEIYCKGC. Serine 192 carries the post-translational modification Phosphoserine.

Interacts with ASCC1; ASCC2 and TRIP4.

It localises to the nucleus. Could play a role in neuronal development. The protein is Cysteine and glycine-rich protein 1 (CSRP1) of Homo sapiens (Human).